A 150-amino-acid chain; its full sequence is FAD synthase (150 aa).

ATP is bound by residues 11–12 (TF), 16–19 (HPGH), D96, and Y124.

This sequence belongs to the archaeal FAD synthase family. As to quaternary structure, homodimer. A divalent metal cation is required as a cofactor.

It carries out the reaction FMN + ATP + H(+) = FAD + diphosphate. Its pathway is cofactor biosynthesis; FAD biosynthesis; FAD from FMN: step 1/1. In terms of biological role, catalyzes the transfer of the AMP portion of ATP to flavin mononucleotide (FMN) to produce flavin adenine dinucleotide (FAD) coenzyme. The chain is FAD synthase from Methanococcus maripaludis (strain C5 / ATCC BAA-1333).